We begin with the raw amino-acid sequence, 204 residues long: Protein GrpE (204 aa).

The tract at residues 1–52 (MSSKNNPESETKAKNKWEKVMEAEEEQEEGGGDGSQEMEPHREGLEFPSREK) is disordered. Composition is skewed to basic and acidic residues over residues 7 to 22 (PESE…KVME) and 38 to 52 (MEPH…SREK).

Belongs to the GrpE family. Homodimer.

The protein resides in the cytoplasm. Participates actively in the response to hyperosmotic and heat shock by preventing the aggregation of stress-denatured proteins, in association with DnaK and GrpE. It is the nucleotide exchange factor for DnaK and may function as a thermosensor. Unfolded proteins bind initially to DnaJ; upon interaction with the DnaJ-bound protein, DnaK hydrolyzes its bound ATP, resulting in the formation of a stable complex. GrpE releases ADP from DnaK; ATP binding to DnaK triggers the release of the substrate protein, thus completing the reaction cycle. Several rounds of ATP-dependent interactions between DnaJ, DnaK and GrpE are required for fully efficient folding. This is Protein GrpE from Coxiella burnetii (strain Dugway 5J108-111).